A 359-amino-acid chain; its full sequence is Holliday junction branch migration complex subunit RuvB (359 aa).

Basic and acidic residues predominate over residues 1–10 (MPEHDPHQEN). The tract at residues 1-20 (MPEHDPHQENRTVSSVRLED) is disordered. The segment at 4–188 (HDPHQENRTV…FGIPLRLIFY (185 aa)) is large ATPase domain (RuvB-L). ATP-binding positions include Leu27, Arg28, Gly69, Lys72, Thr73, Thr74, 135–137 (EDF), Arg178, Tyr188, and Arg225. Position 73 (Thr73) interacts with Mg(2+). The small ATPAse domain (RuvB-S) stretch occupies residues 189–259 (TASELELIVS…TADAALQRLE (71 aa)). The interval 262-359 (SLGLDAMDRR…LLHRDGSADE (98 aa)) is head domain (RuvB-H). The DNA site is built by Arg298, Arg317, and Arg322.

Belongs to the RuvB family. As to quaternary structure, homohexamer. Forms an RuvA(8)-RuvB(12)-Holliday junction (HJ) complex. HJ DNA is sandwiched between 2 RuvA tetramers; dsDNA enters through RuvA and exits via RuvB. An RuvB hexamer assembles on each DNA strand where it exits the tetramer. Each RuvB hexamer is contacted by two RuvA subunits (via domain III) on 2 adjacent RuvB subunits; this complex drives branch migration. In the full resolvosome a probable DNA-RuvA(4)-RuvB(12)-RuvC(2) complex forms which resolves the HJ.

Its subcellular location is the cytoplasm. It catalyses the reaction ATP + H2O = ADP + phosphate + H(+). Functionally, the RuvA-RuvB-RuvC complex processes Holliday junction (HJ) DNA during genetic recombination and DNA repair, while the RuvA-RuvB complex plays an important role in the rescue of blocked DNA replication forks via replication fork reversal (RFR). RuvA specifically binds to HJ cruciform DNA, conferring on it an open structure. The RuvB hexamer acts as an ATP-dependent pump, pulling dsDNA into and through the RuvAB complex. RuvB forms 2 homohexamers on either side of HJ DNA bound by 1 or 2 RuvA tetramers; 4 subunits per hexamer contact DNA at a time. Coordinated motions by a converter formed by DNA-disengaged RuvB subunits stimulates ATP hydrolysis and nucleotide exchange. Immobilization of the converter enables RuvB to convert the ATP-contained energy into a lever motion, pulling 2 nucleotides of DNA out of the RuvA tetramer per ATP hydrolyzed, thus driving DNA branch migration. The RuvB motors rotate together with the DNA substrate, which together with the progressing nucleotide cycle form the mechanistic basis for DNA recombination by continuous HJ branch migration. Branch migration allows RuvC to scan DNA until it finds its consensus sequence, where it cleaves and resolves cruciform DNA. The polypeptide is Holliday junction branch migration complex subunit RuvB (Granulibacter bethesdensis (strain ATCC BAA-1260 / CGDNIH1)).